A 95-amino-acid polypeptide reads, in one-letter code: MLRVVLFAAILVFSIANSEIIDKSLEQSGPIQDSSNFALAVNGEELPTDIALEGQSEVMIRAKRYYGCGCGCGCATVAAVSPVPCGGCCGCGYGK.

2 tandem repeats follow at residues 67–74 (GCGCGCGC) and 85–92 (CGGCCGCG). The tract at residues 67–92 (GCGCGCGCATVAAVSPVPCGGCCGCG) is 2 X 8 AA approximate repeats.

This is an uncharacterized protein from Caenorhabditis elegans.